A 336-amino-acid polypeptide reads, in one-letter code: tRNA N6-adenosine threonylcarbamoyltransferase (336 aa).

Fe cation-binding residues include H114 and H118. Residues 136-140, D169, G182, D186, and N275 contribute to the substrate site; that span reads LVSGG. Fe cation is bound at residue D301.

The protein belongs to the KAE1 / TsaD family. Fe(2+) is required as a cofactor.

It is found in the cytoplasm. The catalysed reaction is L-threonylcarbamoyladenylate + adenosine(37) in tRNA = N(6)-L-threonylcarbamoyladenosine(37) in tRNA + AMP + H(+). Functionally, required for the formation of a threonylcarbamoyl group on adenosine at position 37 (t(6)A37) in tRNAs that read codons beginning with adenine. Is involved in the transfer of the threonylcarbamoyl moiety of threonylcarbamoyl-AMP (TC-AMP) to the N6 group of A37, together with TsaE and TsaB. TsaD likely plays a direct catalytic role in this reaction. This Streptococcus pneumoniae (strain Taiwan19F-14) protein is tRNA N6-adenosine threonylcarbamoyltransferase.